A 38-amino-acid polypeptide reads, in one-letter code: Large ribosomal subunit protein bL36c (38 aa).

The protein belongs to the bacterial ribosomal protein bL36 family.

The protein localises to the plastid. Its subcellular location is the chloroplast. The sequence is that of Large ribosomal subunit protein bL36c (rpl36) from Mesostigma viride (Green alga).